We begin with the raw amino-acid sequence, 215 residues long: 3-isopropylmalate dehydratase small subunit (215 aa).

This sequence belongs to the LeuD family. LeuD type 1 subfamily. As to quaternary structure, heterodimer of LeuC and LeuD.

The enzyme catalyses (2R,3S)-3-isopropylmalate = (2S)-2-isopropylmalate. It participates in amino-acid biosynthesis; L-leucine biosynthesis; L-leucine from 3-methyl-2-oxobutanoate: step 2/4. Its function is as follows. Catalyzes the isomerization between 2-isopropylmalate and 3-isopropylmalate, via the formation of 2-isopropylmaleate. This is 3-isopropylmalate dehydratase small subunit from Chromohalobacter salexigens (strain ATCC BAA-138 / DSM 3043 / CIP 106854 / NCIMB 13768 / 1H11).